We begin with the raw amino-acid sequence, 578 residues long: MDNANCVGGCKFETRSFQYRRRIPYSLGADPLPPVHPLSLKNLVDIDTDLISSQLYELYDSIILNDSGLERRYAFVQKLEQILKKEFPYKNIKTSLFGSTQSLLASNASDIDLCIITDPPQCAPTTCEVSAAFARNGLKKVVCISTAKVPIVKVWDSELQLSCDCNINKTISTLNTRLMRSYVLCDPRVRPLIVMIKYWAKRRCLNDAAEGGTLTSYTISCMVINFLQKRDPPILPSLQMLPHLQDSSTMTDGLDVSFFDDPDLVHGFGDKNEESLGILFVEFFRFFGYLFDYEHFVLSIRHGTFLSKRAKGWQFQLNNFLCVEEPFHTSRNLANTADEITMKGIQLEFRRVFRLLAYNCNVDDACSQFTFPSLTDTSFMDDYVNELQLEIVPGFSHGRDSSDTSCTESPPEPSHFAWAFDPYNATASPYYNQNINSSIDYSSIYSNDVPAIPPNVPYTFVDPYTYACYINNNSYLPPSYMDFYTWYNSPYPKSSHHFDERHGGDRHEKNLSNSRRYSRNKFHKKKQSSGPFQYYPDAFSFTPTDNNSPPSNSSSSEVVSPVSLHSEPVLSTVQAFKS.

Mg(2+) contacts are provided by aspartate 110 and aspartate 112. The region spanning 275–330 (SLGILFVEFFRFFGYLFDYEHFVLSIRHGTFLSKRAKGWQFQLNNFLCVEEPFHTS) is the PAP-associated domain. The disordered stretch occupies residues 495–565 (SHHFDERHGG…SEVVSPVSLH (71 aa)). Over residues 496 to 510 (HHFDERHGGDRHEKN) the composition is skewed to basic and acidic residues. Residues 516–527 (RYSRNKFHKKKQ) show a composition bias toward basic residues. Residues 547 to 565 (NSPPSNSSSSEVVSPVSLH) show a composition bias toward low complexity.

It belongs to the DNA polymerase type-B-like family. In terms of assembly, interacts with pab1. It depends on Mg(2+) as a cofactor. Mn(2+) is required as a cofactor.

The protein localises to the cytoplasm. The protein resides in the nucleus. The catalysed reaction is RNA(n) + ATP = RNA(n)-3'-adenine ribonucleotide + diphosphate. Its function is as follows. Polymerase that creates the 3' poly(A) tail of suc22 mRNA. The polypeptide is Poly(A) RNA polymerase cid13 (cid13) (Schizosaccharomyces pombe (strain 972 / ATCC 24843) (Fission yeast)).